The sequence spans 259 residues: Phosphatidylglycerol--prolipoprotein diacylglyceryl transferase (259 aa).

4 helical membrane-spanning segments follow: residues 9–29, 47–67, 83–103, and 109–129; these read IGPF…VLAV, IDFI…YYVI, IWNG…VLFI, and VLNP…AQAI. A 1,2-diacyl-sn-glycero-3-phospho-(1'-sn-glycerol) is bound at residue arginine 131. 3 helical membrane passes run 167–187, 194–214, and 227–247; these read MPTF…ICYL, LLEG…RFVI, and LRVS…FVIL.

Belongs to the Lgt family.

The protein localises to the cell membrane. It catalyses the reaction L-cysteinyl-[prolipoprotein] + a 1,2-diacyl-sn-glycero-3-phospho-(1'-sn-glycerol) = an S-1,2-diacyl-sn-glyceryl-L-cysteinyl-[prolipoprotein] + sn-glycerol 1-phosphate + H(+). It participates in protein modification; lipoprotein biosynthesis (diacylglyceryl transfer). Functionally, catalyzes the transfer of the diacylglyceryl group from phosphatidylglycerol to the sulfhydryl group of the N-terminal cysteine of a prolipoprotein, the first step in the formation of mature lipoproteins. The chain is Phosphatidylglycerol--prolipoprotein diacylglyceryl transferase from Streptococcus uberis (strain ATCC BAA-854 / 0140J).